The sequence spans 580 residues: Acyl--CoA ligase GME11374 (580 aa).

Belongs to the ATP-dependent AMP-binding enzyme family.

It participates in secondary metabolite biosynthesis. Acyl--CoA ligase; part of the gene cluster that mediates the biosynthesis of dibenzodioxocinones such as pestalotiollide B, a novel class of inhibitors against cholesterol ester transfer protein (CEPT). The biosynthesis initiates from condensation of acetate and malonate units catalyzed by the non-reducing PKS pks8/GME11356. Pks8/GME11356 lacks a thioesterase (TE) domain, which is important to the cyclizing of the third ring of atrochrysone carboxylic acid, and the esterase GME11355 might play the role of TE and catalyzes the cyclization reaction of the C ring. The lactamase-like protein GME11357 (or other beta-lactamases in Pestalotiopsis microspora) probably hydrolyzes the thioester bond between the ACP of pks8/GME11356 and the intermediate to release atrochrysone carboxylic acid, which is spontaneously dehydrates to form endocrocin anthrone. Endocrocin anthrone is further converted to emodin via the endocrocin intermediate. Emodin is then oxidized by several enzymes such as the Baeyer-Villiger oxidase GME11358, the oxidoreductase GME11367, the short chain dehydrogenase/reductase GME11373, as well as by other oxidoreductases from the cluster, to modify the A and C rings and open the B ring, and finally yield monodictyphenone. The prenyltransferase GME11375 may catalyze the addition reaction between the C5 side chains and the carbon bone of dibenzodioxocinones. The remaining biochemical reactions to the final product dibenzodioxocinones should be methylation catalyzed by methyltransferase GME11366 and reduction and lactonization reaction catalyzed by a series of oxidordeuctases. The polypeptide is Acyl--CoA ligase GME11374 (Pestalotiopsis microspora).